Consider the following 432-residue polypeptide: ATP-dependent RNA helicase RhlB (432 aa).

Residues 9-37 carry the Q motif motif; sequence QNFADLGLQPQVIDGLNAKGFIKCTPIQA. Residues 40–219 enclose the Helicase ATP-binding domain; sequence LPVLLAGQDI…FEHMQEPEHV (180 aa). ATP is bound at residue 53 to 60; sequence AQTGTGKT. Residues 165 to 168 carry the DEAD box motif; that stretch reads DEAD. The Helicase C-terminal domain occupies 245–390; that stretch reads ALLQTLIEEE…QSDYDASALL (146 aa). Residues 397 to 432 form a disordered region; the sequence is LRLQRRPQQNRRNNNGQRQGGNRKHSRPRQPRNTQS. The span at 417 to 426 shows a compositional bias: basic residues; the sequence is GNRKHSRPRQ.

This sequence belongs to the DEAD box helicase family. RhlB subfamily. As to quaternary structure, component of the RNA degradosome, which is a multiprotein complex involved in RNA processing and mRNA degradation.

It is found in the cytoplasm. It carries out the reaction ATP + H2O = ADP + phosphate + H(+). Its function is as follows. DEAD-box RNA helicase involved in RNA degradation. Has RNA-dependent ATPase activity and unwinds double-stranded RNA. The polypeptide is ATP-dependent RNA helicase RhlB (Aliivibrio fischeri (strain MJ11) (Vibrio fischeri)).